The sequence spans 231 residues: Fibrillarin-like rRNA/tRNA 2'-O-methyltransferase (231 aa).

Residues 89 to 90, 108 to 109, 133 to 134, and 153 to 156 contribute to the S-adenosyl-L-methionine site; these read TT, EF, DA, and DIAQ.

The protein belongs to the methyltransferase superfamily. Fibrillarin family. In terms of assembly, interacts with nop5. Component of box C/D small ribonucleoprotein (sRNP) particles that contain rpl7ae, FlpA and nop5, plus a guide RNA.

In terms of biological role, involved in pre-rRNA and tRNA processing. Utilizes the methyl donor S-adenosyl-L-methionine to catalyze the site-specific 2'-hydroxyl methylation of ribose moieties in rRNA and tRNA. Site specificity is provided by a guide RNA that base pairs with the substrate. Methylation occurs at a characteristic distance from the sequence involved in base pairing with the guide RNA. The polypeptide is Fibrillarin-like rRNA/tRNA 2'-O-methyltransferase (Sulfolobus acidocaldarius (strain ATCC 33909 / DSM 639 / JCM 8929 / NBRC 15157 / NCIMB 11770)).